The primary structure comprises 660 residues: Cullin-associated NEDD8-dissociated protein 1 homolog (660 aa).

Lysine 16 is covalently cross-linked (Glycyl lysine isopeptide (Lys-Gly) (interchain with G-Cter in NEDD8)). Residues 339–364 are disordered; the sequence is TQNENDHGSDNLIDSDDGFGSDNDPE. A compositionally biased stretch (acidic residues) spans 351-363; sequence IDSDDGFGSDNDP.

As to quaternary structure, interacts with unneddylated cullin CDC53. Post-translationally, neddylated at Lys-16.

Assembly factor of SCF (SKP1-CUL1-F-box protein) E3 ubiquitin ligase complexes that promotes the exchange of the substrate-recognition F-box subunit in SCF complexes, thereby playing a key role in the cellular repertoire of SCF complexes. Acts as a F-box protein exchange factor. Involved in the aging process. Longevity-assurance protein. In Saccharomyces cerevisiae (strain ATCC 204508 / S288c) (Baker's yeast), this protein is Cullin-associated NEDD8-dissociated protein 1 homolog (LAG2).